Here is a 344-residue protein sequence, read N- to C-terminus: Glyceraldehyde-3-phosphate dehydrogenase (344 aa).

NAD(+)-binding positions include 11-12 (TI) and Gly110. 139–141 (SCN) lines the D-glyceraldehyde 3-phosphate pocket. The active-site Nucleophile is Cys140. Arg169 contacts NAD(+). A D-glyceraldehyde 3-phosphate-binding site is contributed by 195 to 196 (HG). Gln302 contacts NAD(+).

The protein belongs to the glyceraldehyde-3-phosphate dehydrogenase family. Homotetramer.

The protein localises to the cytoplasm. The enzyme catalyses D-glyceraldehyde 3-phosphate + phosphate + NADP(+) = (2R)-3-phospho-glyceroyl phosphate + NADPH + H(+). It carries out the reaction D-glyceraldehyde 3-phosphate + phosphate + NAD(+) = (2R)-3-phospho-glyceroyl phosphate + NADH + H(+). Its pathway is carbohydrate degradation; glycolysis; pyruvate from D-glyceraldehyde 3-phosphate: step 1/5. This chain is Glyceraldehyde-3-phosphate dehydrogenase, found in Pyrobaculum neutrophilum (strain DSM 2338 / JCM 9278 / NBRC 100436 / V24Sta) (Thermoproteus neutrophilus).